The following is a 280-amino-acid chain: 4-diphosphocytidyl-2-C-methyl-D-erythritol kinase (280 aa).

The active site involves lysine 8. 91-101 (PVAAGLAGGST) provides a ligand contact to ATP. Aspartate 133 is an active-site residue.

It belongs to the GHMP kinase family. IspE subfamily.

It catalyses the reaction 4-CDP-2-C-methyl-D-erythritol + ATP = 4-CDP-2-C-methyl-D-erythritol 2-phosphate + ADP + H(+). Its pathway is isoprenoid biosynthesis; isopentenyl diphosphate biosynthesis via DXP pathway; isopentenyl diphosphate from 1-deoxy-D-xylulose 5-phosphate: step 3/6. In terms of biological role, catalyzes the phosphorylation of the position 2 hydroxy group of 4-diphosphocytidyl-2C-methyl-D-erythritol. This chain is 4-diphosphocytidyl-2-C-methyl-D-erythritol kinase, found in Clostridium botulinum (strain 657 / Type Ba4).